Reading from the N-terminus, the 191-residue chain is Lipid A 1-phosphatase (191 aa).

The next 5 helical transmembrane spans lie at 22–42, 60–80, 117–137, 145–162, and 164–184; these read LLAL…PKVP, FIPT…VGLF, GNFN…AFLM, YLWL…RIYL, and MHTI…VGLF.

It belongs to the lipid A LpxE 1-phosphatase family.

It localises to the cell inner membrane. It functions in the pathway bacterial outer membrane biogenesis; LPS lipid A biosynthesis. Functionally, removes the 1-phosphate group from tetra- and probably hexaacylated lipid A species. Absence of the 1-phosphate group renders the bacteria partially resistant to host-derived cationic antimicrobial peptides (CAMP), allowing it to camouflage itself from the host innate immune response, and plays a role in the long-term colonization of the host's stomach. The chain is Lipid A 1-phosphatase from Helicobacter pylori (strain J99 / ATCC 700824) (Campylobacter pylori J99).